We begin with the raw amino-acid sequence, 39 residues long: Cytochrome b6-f complex subunit 5 (39 aa).

The chain crosses the membrane as a helical span at residues 5 to 25 (LLCGIVLGLVPVTLLGLFVSA).

It belongs to the PetG family. As to quaternary structure, the 4 large subunits of the cytochrome b6-f complex are cytochrome b6, subunit IV (17 kDa polypeptide, PetD), cytochrome f and the Rieske protein, while the 4 small subunits are PetG, PetL, PetM and PetN. The complex functions as a dimer.

It localises to the cellular thylakoid membrane. Functionally, component of the cytochrome b6-f complex, which mediates electron transfer between photosystem II (PSII) and photosystem I (PSI), cyclic electron flow around PSI, and state transitions. PetG is required for either the stability or assembly of the cytochrome b6-f complex. This chain is Cytochrome b6-f complex subunit 5, found in Prochlorococcus marinus (strain NATL1A).